The following is a 364-amino-acid chain: Fructose-bisphosphate aldolase B (364 aa).

Position 2 is an N-acetylalanine (alanine 2). Lysine 13 bears the N6-succinyllysine mark. Residue serine 36 is modified to Phosphoserine. Threonine 39 is subject to Phosphothreonine. Residue arginine 43 participates in beta-D-fructose 1,6-bisphosphate binding. Threonine 119 carries the post-translational modification Phosphothreonine. An N6-succinyllysine modification is found at lysine 121. Serine 132 carries the post-translational modification Phosphoserine. Residue glutamate 188 is the Proton acceptor of the active site. The Schiff-base intermediate with dihydroxyacetone-P role is filled by lysine 230. Residues serine 272, serine 276, serine 299, and serine 301 each carry the phosphoserine modification. 272–274 (SGG) is a beta-D-fructose 1,6-bisphosphate binding site. Position 304 (arginine 304) interacts with beta-D-fructose 1,6-bisphosphate. Serine 309 is modified (phosphoserine). The residue at position 317 (lysine 317) is an N6-succinyllysine.

It belongs to the class I fructose-bisphosphate aldolase family. Homotetramer. Interacts with BBS1, BBS2, BBS4 and BBS7. Forms a ternary complex with G6PD and TP53; this interaction is direct.

It is found in the cytoplasm. It localises to the cytosol. Its subcellular location is the cytoskeleton. The protein localises to the microtubule organizing center. The protein resides in the centrosome. It is found in the centriolar satellite. It carries out the reaction beta-D-fructose 1,6-bisphosphate = D-glyceraldehyde 3-phosphate + dihydroxyacetone phosphate. It catalyses the reaction beta-D-fructose 1-phosphate = D-glyceraldehyde + dihydroxyacetone phosphate. It functions in the pathway carbohydrate degradation; glycolysis; D-glyceraldehyde 3-phosphate and glycerone phosphate from D-glucose: step 4/4. The protein operates within carbohydrate biosynthesis; gluconeogenesis. Its pathway is carbohydrate metabolism; fructose metabolism. Functionally, catalyzes the aldol cleavage of fructose 1,6-biphosphate to form two triosephosphates dihydroxyacetone phosphate and D-glyceraldehyde 3-phosphate in glycolysis as well as the reverse stereospecific aldol addition reaction in gluconeogenesis. In fructolysis, metabolizes fructose 1-phosphate derived from the phosphorylation of dietary fructose by fructokinase into dihydroxyacetone phosphate and D-glyceraldehyde. Acts as an adapter independently of its enzymatic activity, exerts a tumor suppressor role by stabilizing the ternary complex with G6PD and TP53 to inhibit G6PD activity and keep oxidative pentose phosphate metabolism in check. The polypeptide is Fructose-bisphosphate aldolase B (ALDOB) (Bos taurus (Bovine)).